Reading from the N-terminus, the 364-residue chain is tRNA-specific 2-thiouridylase MnmA 1 (364 aa).

Residues G10–S17 and M36 each bind ATP. Residue C106 is the Nucleophile of the active site. A disulfide bond links C106 and C204. G130 is a binding site for ATP. The segment at K154–Q156 is interaction with tRNA. The Cysteine persulfide intermediate role is filled by C204. The interval R310–Y311 is interaction with tRNA.

Belongs to the MnmA/TRMU family.

Its subcellular location is the cytoplasm. It carries out the reaction S-sulfanyl-L-cysteinyl-[protein] + uridine(34) in tRNA + AH2 + ATP = 2-thiouridine(34) in tRNA + L-cysteinyl-[protein] + A + AMP + diphosphate + H(+). In terms of biological role, catalyzes the 2-thiolation of uridine at the wobble position (U34) of tRNA, leading to the formation of s(2)U34. In Thermoanaerobacter pseudethanolicus (strain ATCC 33223 / 39E) (Clostridium thermohydrosulfuricum), this protein is tRNA-specific 2-thiouridylase MnmA 1.